Consider the following 662-residue polypeptide: DNA helicase/primase complex-associated protein (662 aa).

This sequence belongs to the herpesviridae HEPA family. As to quaternary structure, associates with the primase and the helicase to form the helicase-primase complex. Interacts with the origin-binding protein. Interacts with the polymerase catalytic subunit.

It is found in the host nucleus. Its function is as follows. Component of the helicase/primase complex. Unwinds the DNA at the replication forks and generates single-stranded DNA for both leading and lagging strand synthesis. The primase synthesizes short RNA primers on the lagging strand that the polymerase presumably elongates using dNTPs. The primase-associated factor has no known catalytic activity in the complex and may serve to facilitate the formation of the replisome by directly interacting with the origin-binding protein and the polymerase. The protein is DNA helicase/primase complex-associated protein (U74) of Human herpesvirus 6B (strain Z29) (HHV-6 variant B).